A 731-amino-acid polypeptide reads, in one-letter code: Vezatin (731 aa).

2 helical membrane passes run 91-111 (LATP…LLVM) and 114-134 (TWWI…YLVI). Residues 382–414 (VRSLQLHLKALLNEVIILEDELEKLVCTKETQE) adopt a coiled-coil conformation. Disordered regions lie at residues 570 to 671 (PVDP…DSLQ) and 710 to 731 (QTFG…IEEK). Residues 577–586 (ISNSEPSMNS) show a composition bias toward polar residues. The segment covering 590–601 (KVSKNDTEEESS) has biased composition (basic and acidic residues). Over residues 658-671 (GLTTAPPTPRDSLQ) the composition is skewed to polar residues. The span at 712 to 721 (FGDEEEEQII) shows a compositional bias: acidic residues. Residues 722–731 (EENKNKIEEK) are compositionally biased toward basic and acidic residues.

This sequence belongs to the vezatin family. Interacts with USH2A (via the cytoplasmic region); the interaction associates VEZT with the USH2 complex at the stereocilia base. Interacts with myosin MYO7A and the cadherin-catenins complex.

The protein localises to the cell membrane. The protein resides in the cell projection. It is found in the stereocilium membrane. It localises to the cell junction. Its subcellular location is the adherens junction. The protein localises to the nucleus. The protein resides in the cytoplasmic vesicle. It is found in the secretory vesicle. It localises to the acrosome. In terms of biological role, plays a pivotal role in the establishment of adherens junctions and their maintenance in adult life. Required for morphogenesis of the preimplantation embryo, and for the implantation process. The polypeptide is Vezatin (VEZT) (Pongo abelii (Sumatran orangutan)).